A 399-amino-acid chain; its full sequence is Serine/threonine-protein kinase PknL (399 aa).

The Cytoplasmic portion of the chain corresponds to 1–368 (MVEAGTRDPL…FIWARQHARR (368 aa)). A Protein kinase domain is found at 19 to 278 (YLVQAKIASG…IAMGADLEAI (260 aa)). Residues 25–33 (IASGGTSTV) and Lys48 contribute to the ATP site. Thr32 bears the Phosphothreonine; by autocatalysis mark. Thr62 carries the phosphothreonine; by autocatalysis modification. Asp142 acts as the Proton acceptor in catalysis. Phosphothreonine; by autocatalysis is present on residues Thr173, Thr175, and Thr323. Residues 312-346 (GQLGAKPVHHPTRQLTRQPGDCSEPASGSEPEHEP) form a disordered region. A helical transmembrane segment spans residues 369 to 389 (MVLVWVSVVLAITGLVASAAW). Topologically, residues 390-399 (TIGSNLSGLL) are extracellular.

The protein belongs to the protein kinase superfamily. Ser/Thr protein kinase family. Post-translationally, autophosphorylated. Thr-173 is required for autophosphorylation and transphosphorylation activities. Thr-175 is not necessary for autophosphorylation activity, but is required for full kinase activity.

It localises to the cell membrane. It catalyses the reaction L-seryl-[protein] + ATP = O-phospho-L-seryl-[protein] + ADP + H(+). It carries out the reaction L-threonyl-[protein] + ATP = O-phospho-L-threonyl-[protein] + ADP + H(+). In terms of biological role, phosphorylates the DNA-binding protein MT2231. May be involved in the regulation of cell division and cell envelope biosynthesis. This chain is Serine/threonine-protein kinase PknL (pknL), found in Mycobacterium tuberculosis (strain CDC 1551 / Oshkosh).